The chain runs to 277 residues: Undecaprenyl-diphosphatase (277 aa).

Transmembrane regions (helical) follow at residues 88–108 (MGWL…LFQD), 117–137 (MWIV…ADAV), 157–179 (FAQA…AGLL), 191–211 (SFLL…YKTV), 227–247 (LATV…LKFV), and 255–275 (FVWY…FNVI).

This sequence belongs to the UppP family.

It localises to the cell membrane. The enzyme catalyses di-trans,octa-cis-undecaprenyl diphosphate + H2O = di-trans,octa-cis-undecaprenyl phosphate + phosphate + H(+). In terms of biological role, catalyzes the dephosphorylation of undecaprenyl diphosphate (UPP). Confers resistance to bacitracin. The chain is Undecaprenyl-diphosphatase from Paenarthrobacter aurescens (strain TC1).